The sequence spans 1340 residues: Iron-sulfur cluster assembly protein SufD (1340 aa).

The span at Asn477 to Lys487 shows a compositional bias: low complexity. 5 disordered regions span residues Asn477–Ser498, His723–Asn743, Asn765–Val794, Glu835–Lys865, and Asn992–Gln1055. Residues His723 to Asn734 show a composition bias toward basic and acidic residues. Polar residues predominate over residues Asn782–Val794. Over residues Asp1022–Ile1037 the composition is skewed to polar residues.

This sequence belongs to the iron-sulfur cluster assembly SufBD family. In terms of assembly, component of a complex composed of SufB, SufC and SufD in a stoichiometric ratio of 1:2:1. Interacts with SufB. Interacts with SufC; the interaction enhances the ATPase activity of SufC.

The protein resides in the plastid. Its subcellular location is the apicoplast. It participates in cofactor biosynthesis; iron-sulfur cluster biosynthesis. Participates in the sulfur mobilization (SUF) pathway for iron-sulfur (Fe-S) cluster biogenesis. As part of a complex consisting of SufB-SufC(2)-SufD, involved in assembly of [4Fe-4S] clusters. Enhances the ATPase activity of SufC. The chain is Iron-sulfur cluster assembly protein SufD from Plasmodium berghei (strain Anka).